The following is a 125-amino-acid chain: MAAKKSSTPNRGFKVADQIQRDLTELIRELKDPRIGMVTLQAVEVTPDYAHAKVFFSVLVGDADATQDALNQAAGFLRNGLFKRLHIHTVPTLHFMFDRTTERASDMNALIARAVASRSKDDDEA.

The protein belongs to the RbfA family. Monomer. Binds 30S ribosomal subunits, but not 50S ribosomal subunits or 70S ribosomes.

The protein resides in the cytoplasm. In terms of biological role, one of several proteins that assist in the late maturation steps of the functional core of the 30S ribosomal subunit. Associates with free 30S ribosomal subunits (but not with 30S subunits that are part of 70S ribosomes or polysomes). Required for efficient processing of 16S rRNA. May interact with the 5'-terminal helix region of 16S rRNA. The polypeptide is Ribosome-binding factor A (Paracidovorax citrulli (strain AAC00-1) (Acidovorax citrulli)).